We begin with the raw amino-acid sequence, 545 residues long: Chaperonin GroEL 2 (545 aa).

ATP-binding positions include 30–33, lysine 51, 87–91, glycine 415, and aspartate 496; these read TLGP and DGTTT.

It belongs to the chaperonin (HSP60) family. In terms of assembly, forms a cylinder of 14 subunits composed of two heptameric rings stacked back-to-back. Interacts with the co-chaperonin GroES.

It is found in the cytoplasm. It catalyses the reaction ATP + H2O + a folded polypeptide = ADP + phosphate + an unfolded polypeptide.. Together with its co-chaperonin GroES, plays an essential role in assisting protein folding. The GroEL-GroES system forms a nano-cage that allows encapsulation of the non-native substrate proteins and provides a physical environment optimized to promote and accelerate protein folding. The sequence is that of Chaperonin GroEL 2 from Nitrobacter winogradskyi (strain ATCC 25391 / DSM 10237 / CIP 104748 / NCIMB 11846 / Nb-255).